Consider the following 49-residue polypeptide: Soritesidine (49 aa).

Its subcellular location is the secreted. In terms of biological role, very potent toxin that exhibits a wide range of toxicities over various organisms and cells including brine shrimp larvae (Artemia salina), sea hare eggs (Aplysia kurodai), mice, and cultured mammalian cells. An SOR-containing fraction cleaves plasmid DNA in a bivalent metal ion dependent manner suggesting genotoxicity of SOR. This Spongosorites sp. (strain QM G324170) (Okinawan marine Sponge) protein is Soritesidine.